We begin with the raw amino-acid sequence, 152 residues long: Acidic phospholipase A2 S16-19 (152 aa).

An N-terminal signal peptide occupies residues Met-1 to Ala-19. Positions Ser-20–Leu-27 are excised as a propeptide. 6 disulfide bridges follow: Cys-38–Cys-104, Cys-54–Cys-151, Cys-71–Cys-132, Cys-78–Cys-125, Cys-88–Cys-118, and Cys-111–Cys-123. The Ca(2+) site is built by Tyr-55, Gly-57, and Gly-59. Residue His-75 is part of the active site. Asp-76 lines the Ca(2+) pocket. Residue Asp-126 is part of the active site.

Belongs to the phospholipase A2 family. Group I subfamily. D49 sub-subfamily. Requires Ca(2+) as cofactor. In terms of processing, this enzyme lacks one of the seven disulfide bonds found in similar PLA2 proteins. As to expression, expressed by the venom gland.

It is found in the secreted. The catalysed reaction is a 1,2-diacyl-sn-glycero-3-phosphocholine + H2O = a 1-acyl-sn-glycero-3-phosphocholine + a fatty acid + H(+). Functionally, snake venom phospholipase A2 (PLA2) that inhibits collagen-induced platelet aggregation. PLA2 catalyzes the calcium-dependent hydrolysis of the 2-acyl groups in 3-sn-phosphoglycerides. The sequence is that of Acidic phospholipase A2 S16-19 from Austrelaps superbus (Lowland copperhead snake).